The following is a 526-amino-acid chain: Glutamate--cysteine ligase (526 aa).

Belongs to the glutamate--cysteine ligase type 1 family. Type 1 subfamily.

The catalysed reaction is L-cysteine + L-glutamate + ATP = gamma-L-glutamyl-L-cysteine + ADP + phosphate + H(+). It functions in the pathway sulfur metabolism; glutathione biosynthesis; glutathione from L-cysteine and L-glutamate: step 1/2. This chain is Glutamate--cysteine ligase, found in Proteus mirabilis (strain HI4320).